Here is a 215-residue protein sequence, read N- to C-terminus: Pyridoxine/pyridoxamine 5'-phosphate oxidase (215 aa).

Substrate is bound by residues 9–12 (RRDY) and Lys69. Residues 64-69 (RVLLLK), 79-80 (FT), Lys86, and Gln108 contribute to the FMN site. Substrate is bound by residues Tyr126, Arg130, and Ser134. Residues 143–144 (QS) and Trp188 contribute to the FMN site. Position 194 to 196 (194 to 196 (RLH)) interacts with substrate. Arg198 contacts FMN.

This sequence belongs to the pyridoxamine 5'-phosphate oxidase family. In terms of assembly, homodimer. The cofactor is FMN.

It carries out the reaction pyridoxamine 5'-phosphate + O2 + H2O = pyridoxal 5'-phosphate + H2O2 + NH4(+). It catalyses the reaction pyridoxine 5'-phosphate + O2 = pyridoxal 5'-phosphate + H2O2. The protein operates within cofactor metabolism; pyridoxal 5'-phosphate salvage; pyridoxal 5'-phosphate from pyridoxamine 5'-phosphate: step 1/1. Its pathway is cofactor metabolism; pyridoxal 5'-phosphate salvage; pyridoxal 5'-phosphate from pyridoxine 5'-phosphate: step 1/1. Its function is as follows. Catalyzes the oxidation of either pyridoxine 5'-phosphate (PNP) or pyridoxamine 5'-phosphate (PMP) into pyridoxal 5'-phosphate (PLP). This chain is Pyridoxine/pyridoxamine 5'-phosphate oxidase, found in Pseudomonas syringae pv. syringae (strain B728a).